The sequence spans 183 residues: Pentapeptide repeat protein MfpA (183 aa).

The Pentapeptide repeat domain occupies 113-147 (SLVDTDLRKCVLRGADLSGARTTGARLDDADLRGA).

Belongs to the pentapeptide repeat protein family. Homodimer. Probably interacts with DNA gyrase.

In terms of biological role, might be involved in fluoroquinolone resistance. Inhibits ATP-independent DNA relaxation, ATP-dependent DNA supercoiling and ATP-dependent decatenation by endogenous gyrase, 50% inhibition occurs at 2 uM; inhibition is abolished if GyrA is mutated (Asp-87 to Gly or His). Also inhibits fluoroquinolone-promoted dsDNA cleavage. Increases fluoroquinolone (ciprofloxacin or moxifloxacin) inhibition of gyrase supercoiling activity in a concentration-dependent manner. Inhibits DNA relaxation and supercoiling by E.coli gyrase. Forms a structure that exhibits size, shape and electrostatic similarity to B-form DNA; it may bind to DNA gyrase which is postulated to protect it from fluoroquinolones. This Mycobacterium tuberculosis (strain ATCC 25618 / H37Rv) protein is Pentapeptide repeat protein MfpA.